We begin with the raw amino-acid sequence, 636 residues long: ATP-dependent zinc metalloprotease FtsH 1 (636 aa).

At 1–18 the chain is on the cytoplasmic side; that stretch reads MKLSPPKKNLPPQKNNEP. Residues 19–39 traverse the membrane as a helical segment; sequence PFPYLRLLVQVGIALFLVWIW. Residues 40–126 are Periplasmic-facing; sequence QESLHKATVS…YGSVKPSLLS (87 aa). The chain crosses the membrane as a helical span at residues 127–147; it reads QILFSWVVPILIFFLVWFALA. Over 148–636 the chain is Cytoplasmic; sequence RFMGGGGAGY…KEAPSYSSTL (489 aa). Residue 220–227 coordinates ATP; sequence GPPGTGKT. His442 provides a ligand contact to Zn(2+). Glu443 is a catalytic residue. Zn(2+) contacts are provided by His446 and Asp519.

The protein in the central section; belongs to the AAA ATPase family. It in the C-terminal section; belongs to the peptidase M41 family. As to quaternary structure, homohexamer. It depends on Zn(2+) as a cofactor.

It localises to the cell inner membrane. Acts as a processive, ATP-dependent zinc metallopeptidase for both cytoplasmic and membrane proteins. Plays a role in the quality control of integral membrane proteins. This is ATP-dependent zinc metalloprotease FtsH 1 from Methylacidiphilum infernorum (isolate V4) (Methylokorus infernorum (strain V4)).